A 352-amino-acid chain; its full sequence is DNA primase (352 aa).

Disordered stretches follow at residues 145–172 (DPKL…REDG) and 318–352 (YRQQ…GMSL). The span at 318–332 (YRQQWEKLEGREPVR) shows a compositional bias: basic and acidic residues.

Functionally, functions as a primase with respect to replication at the (vegetative) origin of replication of pTF-FC2. The protein is DNA primase (repB) of Acidithiobacillus ferrooxidans (Thiobacillus ferrooxidans).